The chain runs to 397 residues: MSNVNTLSALAKSGALSGKRVFIRADLNVPFDDAGRISEDTRIRASVPGIRLALDAGAAVMVTSHLGRPKEGALTEADSLAPVAQRLSELLGMQVRLVPDWVDGVSVEPGEVVLLENCRGNVGEKKDDEGLSRKMAALCDVYVNDAFGTAHRAEATTHGIARFAPVACAGPLLEAELEALGRALHDPKRSLVAIVGGSKVSTKLSILQSLADKVDQLVVGGGIANTFMLAAGLPIGKSLAEPEQVEQARAVIEIMKRRGAEVPIPTDVVCAKSFGADAAATVKAAADVAEDDMILDIGPQTAQRLADILKAAGTIVWNGPVGVFEFDQFAHGTEVVARAIADSAGFSIAGGGDTLAAIAKYGIADQTGYISTGGGAFLEFLEGKALPAVAVLQARAA.

Substrate is bound by residues 26-28, Arg-42, 65-68, Arg-119, and Arg-152; these read DLN and HLGR. Residues Lys-203, Glu-325, and 351 to 354 each bind ATP; that span reads GGDT.

The protein belongs to the phosphoglycerate kinase family. Monomer.

The protein localises to the cytoplasm. It catalyses the reaction (2R)-3-phosphoglycerate + ATP = (2R)-3-phospho-glyceroyl phosphate + ADP. The protein operates within carbohydrate degradation; glycolysis; pyruvate from D-glyceraldehyde 3-phosphate: step 2/5. The polypeptide is Phosphoglycerate kinase (Bordetella bronchiseptica (strain ATCC BAA-588 / NCTC 13252 / RB50) (Alcaligenes bronchisepticus)).